A 259-amino-acid chain; its full sequence is V-type proton ATPase subunit D (259 aa).

Positions 214–259 (KLKEQEAAQRALEGPPKEEAGGTHSENQPPRNLLAVEEDNLPVLFN) are disordered.

Belongs to the V-ATPase D subunit family. V-ATPase is a heteromultimeric enzyme made up of two complexes: the ATP-hydrolytic V1 complex and the proton translocation V0 complex. The V1 complex consists of three catalytic AB heterodimers that form a heterohexamer, three peripheral stalks each consisting of EG heterodimers, one central rotor including subunits D and F, and the regulatory subunits C and H. The proton translocation complex V0 consists of the proton transport subunit a, a ring of proteolipid subunits c9c'', rotary subunit d, and The proton translocation complex V0 consists of the proton transport subunit a, a ring of proteolipid subunits c9c'', rotary subunit d, subunits e and f, and the accessory subunits vah-19/Ac45 and vah-20/PRR.

Subunit of the V1 complex of vacuolar(H+)-ATPase (V-ATPase), a multisubunit enzyme composed of a peripheral complex (V1) that hydrolyzes ATP and a membrane integral complex (V0) that translocates protons. V-ATPase is responsible for acidifying and maintaining the pH of intracellular compartments and in some cell types, is targeted to the plasma membrane, where it is responsible for acidifying the extracellular environment. The polypeptide is V-type proton ATPase subunit D (Caenorhabditis briggsae).